Consider the following 372-residue polypeptide: D-alanine--D-alanine ligase (372 aa).

The 205-residue stretch at 145 to 349 folds into the ATP-grasp domain; that stretch reads KTVLRAGGIP…CPNLLDQLIE (205 aa). 176 to 231 provides a ligand contact to ATP; it reads DRWGTSELFVKAVSLGSSVATLPVKTETEFTKAVKEVFRYDDRLMVEPRIRGREIE. Mg(2+)-binding residues include Asp303, Glu316, and Asn318.

Belongs to the D-alanine--D-alanine ligase family. Mg(2+) is required as a cofactor. The cofactor is Mn(2+).

It is found in the cytoplasm. The enzyme catalyses 2 D-alanine + ATP = D-alanyl-D-alanine + ADP + phosphate + H(+). It participates in cell wall biogenesis; peptidoglycan biosynthesis. In terms of biological role, cell wall formation. The polypeptide is D-alanine--D-alanine ligase (Coxiella burnetii (strain CbuK_Q154) (Coxiella burnetii (strain Q154))).